A 1116-amino-acid polypeptide reads, in one-letter code: MAP kinase kinase kinase mkh1 (1116 aa).

Disordered stretches follow at residues 510–601 and 618–647; these read LKMP…SNSL and ALDE…ENHH. The segment covering 515–531 has biased composition (low complexity); it reads NSGSSAPQSPSSNTSAS. Positions 553-569 are enriched in basic residues; that stretch reads LRRKNTLTRRPSIRHAR. Over residues 588–601 the composition is skewed to low complexity; the sequence is SFDPKASSKSSNSL. The segment covering 634–647 has biased composition (polar residues); sequence PKQSSSQVPKENHH. In terms of domain architecture, Protein kinase spans 825 to 1094; sequence WMKGELIGNG…AEELLNHPFM (270 aa). ATP-binding positions include 831-839 and Lys-854; that span reads IGNGTYGKV. Asp-955 serves as the catalytic Proton acceptor.

This sequence belongs to the protein kinase superfamily. STE Ser/Thr protein kinase family. MAP kinase kinase kinase subfamily.

It carries out the reaction L-seryl-[protein] + ATP = O-phospho-L-seryl-[protein] + ADP + H(+). It catalyses the reaction L-threonyl-[protein] + ATP = O-phospho-L-threonyl-[protein] + ADP + H(+). In terms of biological role, may regulate cell morphology, cell wall integrity, salt resistance, cell cycle reentry from stationary-phase arrest, and filamentous growth in response to stress. Activates the MAP kinase kinase skh1/pek1 by phosphorylation. This is MAP kinase kinase kinase mkh1 (mkh1) from Schizosaccharomyces pombe (strain 972 / ATCC 24843) (Fission yeast).